Consider the following 515-residue polypeptide: Cytochrome P450 2D7 (515 aa).

The Extracellular portion of the chain corresponds to 1-2 (MG). The chain crosses the membrane as a helical span at residues 3–23 (LEALVPLAMIVAIFLLLVDLM). The Cytoplasmic portion of the chain corresponds to 24 to 301 (HRHQRWAARY…DENLRIVVGN (278 aa)). The helical transmembrane segment at 302–322 (LFLAGMVTTSTTLAWGLLLMI) threads the bilayer. Topologically, residues 323-515 (LHLDVQRGRR…SPYELCAVPR (193 aa)) are extracellular. A glycan (N-linked (GlcNAc...) asparagine) is linked at Asn416. Cys461 contacts heme.

This sequence belongs to the cytochrome P450 family. Heme serves as cofactor. Expressed in brain cortex (at protein level).

The protein localises to the membrane. It localises to the cytoplasm. Its subcellular location is the mitochondrion. The enzyme catalyses an organic molecule + reduced [NADPH--hemoprotein reductase] + O2 = an alcohol + oxidized [NADPH--hemoprotein reductase] + H2O + H(+). May be responsible for the metabolism of many drugs and environmental chemicals that it oxidizes. It may be involved in the metabolism of codeine to morphine. However, another study could not confirm it. The sequence is that of Cytochrome P450 2D7 from Homo sapiens (Human).